Here is a 345-residue protein sequence, read N- to C-terminus: Uroporphyrinogen decarboxylase (345 aa).

Residues Arg-24 to Arg-28, Asp-74, Tyr-150, Ser-205, and His-318 each bind substrate.

Belongs to the uroporphyrinogen decarboxylase family. As to quaternary structure, homodimer.

Its subcellular location is the cytoplasm. It carries out the reaction uroporphyrinogen III + 4 H(+) = coproporphyrinogen III + 4 CO2. Its pathway is porphyrin-containing compound metabolism; protoporphyrin-IX biosynthesis; coproporphyrinogen-III from 5-aminolevulinate: step 4/4. In terms of biological role, catalyzes the decarboxylation of four acetate groups of uroporphyrinogen-III to yield coproporphyrinogen-III. The protein is Uroporphyrinogen decarboxylase of Dichelobacter nodosus (strain VCS1703A).